The sequence spans 160 residues: Small ribosomal subunit protein uS9 (160 aa).

It belongs to the universal ribosomal protein uS9 family.

The sequence is that of Small ribosomal subunit protein uS9 from Bradyrhizobium sp. (strain ORS 278).